We begin with the raw amino-acid sequence, 308 residues long: uncharacterized protein (308 aa).

One can recognise an ABC transporter domain in the interval 6 to 234 (LHIEGLDKKI…TEKAIIEVQP (229 aa)). An ATP-binding site is contributed by 38–45 (GPNGSGKT).

It belongs to the ABC transporter superfamily.

This is an uncharacterized protein from Bacillus subtilis (strain 168).